Reading from the N-terminus, the 400-residue chain is Enoyl-[acyl-carrier-protein] reductase [NADH] 1 (400 aa).

Residues 48-53 (GASSGY), 74-75 (FE), 111-112 (DA), and 139-140 (LA) contribute to the NAD(+) site. Y225 is a binding site for substrate. The Proton donor role is filled by Y235. Residues K244 and 273-275 (VVT) contribute to the NAD(+) site.

This sequence belongs to the TER reductase family. In terms of assembly, monomer.

The catalysed reaction is a 2,3-saturated acyl-[ACP] + NAD(+) = a (2E)-enoyl-[ACP] + NADH + H(+). The protein operates within lipid metabolism; fatty acid biosynthesis. Involved in the final reduction of the elongation cycle of fatty acid synthesis (FAS II). Catalyzes the reduction of a carbon-carbon double bond in an enoyl moiety that is covalently linked to an acyl carrier protein (ACP). This chain is Enoyl-[acyl-carrier-protein] reductase [NADH] 1, found in Vibrio vulnificus (strain YJ016).